Here is a 264-residue protein sequence, read N- to C-terminus: MERQQIIESLRRIIPTESTEYNERLISLGESFLEWSKYKHNLKATEELCRPYMAAHLACELLSNDLNLEINLLATPIPKKKYYKLFTYFQEILSPLTKSLAAKDDLMETITYLCTKLGGSTAIPYVKQLVKAVVTNDMRIEHKRGIIIAAYLLVSAKAFGKDELHINHTERRKAQSVLQDTSSALQIQYWMHVLSESWQYKEIPLNGIEGYESQKQRIKPWSGIASMIQIDYEKRLQNYPIWKACIEERIQYYKSQLEKDGTAS.

Belongs to the ORC6 family. ORC is composed of six subunits. ORC interacts with cdc18, recruiting it to the ars1 origin of replication.

Its subcellular location is the nucleus. Functionally, component of the origin recognition complex (ORC) that binds origins of replication. It has a role in both chromosomal replication and mating type transcriptional silencing. ORC binds to multiple sites within the ars1 origin of DNA replication in an ATP-independent manner. This Schizosaccharomyces pombe (strain 972 / ATCC 24843) (Fission yeast) protein is Origin recognition complex subunit 6 (orc6).